The chain runs to 78 residues: Disintegrin DisBa-01 (78 aa).

A Disintegrin domain is found at Gly1–Ala78. 6 cysteine pairs are disulfide-bonded: Cys11-Cys26, Cys13-Cys21, Cys20-Cys43, Cys34-Cys40, Cys39-Cys64, and Cys52-Cys71. Positions Arg56–Asp58 match the Cell attachment site motif.

It belongs to the venom metalloproteinase (M12B) family. P-II subfamily. P-IIa sub-subfamily. Monomer. In terms of tissue distribution, expressed by the venom gland.

The protein resides in the secreted. This recombinant disintegrin antagonizes integrins alpha-IIb/beta-3 (ITGA2B/ITGB3) and alpha-V/beta-3 (ITGAV/ITGB3). On ITGA2B/ITGB3, it interferes with the outside/-in phosphorylation of the focal adhesion kinase (PTK2 / FAK) downstream of the integrin. It strongly inhibits platelet aggregation induced by ADP, thrombin, and collagen, abolishes and reverses dynamic platelet recruitment to immobilized fibrinogen. In vivo, it induces a dramatic increase in the tail bleeding time, and has a strong antithrombotic activity. On ITGAV/ITGB3, it inhibits the adhesion of ITGAV/ITGB3-expressing human microvascular endothelial cell line and murine melanoma cell line to vitronectin (IC(50) are 555 nM and 225 nM, respectively), and transiently inhibits their proliferation without direct cell toxicity. In vivo, it potently inhibits angiogenesis and metastasis, probably due to its capability to strongly inhibit the expression of VEGF and its receptors in endothelial cells. It also inhibits tumor cell migration in vitro. This Bothrops alternatus (Urutu) protein is Disintegrin DisBa-01.